The primary structure comprises 262 residues: Pyridoxine 5'-phosphate synthase (262 aa).

Asn6 contributes to the 3-amino-2-oxopropyl phosphate binding site. 8–9 (DH) contributes to the 1-deoxy-D-xylulose 5-phosphate binding site. Arg17 is a binding site for 3-amino-2-oxopropyl phosphate. His42 functions as the Proton acceptor in the catalytic mechanism. Positions 44 and 49 each coordinate 1-deoxy-D-xylulose 5-phosphate. Glu69 acts as the Proton acceptor in catalysis. Thr99 serves as a coordination point for 1-deoxy-D-xylulose 5-phosphate. The active-site Proton donor is His213. Residues Gly214 and 235-236 (GH) each bind 3-amino-2-oxopropyl phosphate.

It belongs to the PNP synthase family. In terms of assembly, homooctamer; tetramer of dimers.

The protein localises to the cytoplasm. It catalyses the reaction 3-amino-2-oxopropyl phosphate + 1-deoxy-D-xylulose 5-phosphate = pyridoxine 5'-phosphate + phosphate + 2 H2O + H(+). It functions in the pathway cofactor biosynthesis; pyridoxine 5'-phosphate biosynthesis; pyridoxine 5'-phosphate from D-erythrose 4-phosphate: step 5/5. In terms of biological role, catalyzes the complicated ring closure reaction between the two acyclic compounds 1-deoxy-D-xylulose-5-phosphate (DXP) and 3-amino-2-oxopropyl phosphate (1-amino-acetone-3-phosphate or AAP) to form pyridoxine 5'-phosphate (PNP) and inorganic phosphate. The polypeptide is Pyridoxine 5'-phosphate synthase (Wolinella succinogenes (strain ATCC 29543 / DSM 1740 / CCUG 13145 / JCM 31913 / LMG 7466 / NCTC 11488 / FDC 602W) (Vibrio succinogenes)).